The chain runs to 387 residues: MSSVEIVAQQLLAAEHPRRMGKGAAADPRRAALGELTNLNAAAATNGKVGPAKKPLKASCAQKPKLTQLVASMIQTGAAASAPVLAKPSVKEEQELCQAFSEVLLAVQDVDEQDADQPQLCSQYVKDIYKYLHILEEQQPVRANYMQGYEVTERMRALLVDWLVQVHSRFQLLQETLYLTVAILDRFLQVHPVSRRKLQLVGVTAMLVACKYEEMYAPEVGDFAYITDNAFTKSQIVEMEQVILRSLSFQLGRPLPLHFLRRATKVAGADVEKHTLAKYLMELTLLDYHMVHYRPSEVAAAALCLSQLLLDGLPWSLTQQQYSTYEEQHLKPIMQHMAKNVVLVNEGRTKFLAVKKKYSSSKLMKISLIPQLNSSTVKTMADALHDH.

This sequence belongs to the cyclin family. Cyclin AB subfamily. As to quaternary structure, interacts with the CDK1 protein kinase to form a serine/threonine kinase holoenzyme complex also known as maturation promoting factor (MPF). The cyclin subunit imparts substrate specificity to the complex.

Essential for the control of the cell cycle at the G2/M (mitosis) transition. The polypeptide is G2/mitotic-specific cyclin-B2 (ccnb2) (Oryzias latipes (Japanese rice fish)).